Here is a 288-residue protein sequence, read N- to C-terminus: Probable coatomer subunit epsilon (288 aa).

Ser-262 carries the post-translational modification Phosphoserine.

Belongs to the COPE family. As to quaternary structure, oligomeric complex that consists of at least the alpha, beta, beta', gamma, delta, epsilon and zeta subunits.

The protein resides in the cytoplasm. Its subcellular location is the golgi apparatus membrane. It localises to the cytoplasmic vesicle. The protein localises to the COPI-coated vesicle membrane. Functionally, the coatomer is a cytosolic protein complex that binds to dilysine motifs and reversibly associates with Golgi non-clathrin-coated vesicles, which further mediate biosynthetic protein transport from the ER, via the Golgi up to the trans Golgi network. The coatomer complex is required for budding from Golgi membranes, and is essential for the retrograde Golgi-to-ER transport of dilysine-tagged proteins. This is Probable coatomer subunit epsilon (sec28) from Schizosaccharomyces pombe (strain 972 / ATCC 24843) (Fission yeast).